A 142-amino-acid polypeptide reads, in one-letter code: Histone H2AX (142 aa).

Residues methionine 1–alanine 22 are disordered. An N-acetylserine modification is found at serine 2. At serine 2 the chain carries Phosphoserine. The segment covering threonine 7–serine 19 has biased composition (basic residues). Lysine 10 is modified (N6-lactoyllysine; alternate). Residues lysine 14, lysine 16, and lysine 120 each participate in a glycyl lysine isopeptide (Lys-Gly) (interchain with G-Cter in ubiquitin) cross-link. Residues glutamine 123–tyrosine 142 form a disordered region. Position 139 is a phosphoserine (serine 139). A [ST]-Q motif motif is present at residues serine 139 to glutamine 140. Residue tyrosine 142 is modified to Phosphotyrosine; by WSTF.

The protein belongs to the histone H2A family. As to quaternary structure, the nucleosome is a histone octamer containing two molecules each of H2A, H2B, H3 and H4 assembled in one H3-H4 heterotetramer and two H2A-H2B heterodimers. The octamer wraps approximately 147 bp of DNA. Interacts with numerous proteins required for DNA damage signaling and repair when phosphorylated on Ser-139. In terms of processing, phosphorylated. Phosphorylation of Ser-139 (H2AX139ph) occurs in response to DNA double strand breaks (DSBs) generated by exogenous genotoxic agents, by stalled replication forks and by meiotic recombination events. Phosphorylation is dependent on the DNA damage checkpoint kinases ATR and ATM, spreads on either side of a detected DSB site and may mark the surrounding chromatin for recruitment of proteins required for DNA damage signaling and repair. Widespread phosphorylation may also serve to amplify the damage signal or aid repair of persistent lesions. Dephosphorylation of Ser-139 is required for DNA DSB repair. Phosphorylation at Tyr-142 (H2AXY142ph) by baz1b/wstf determines the relative recruitment of either DNA repair or pro-apoptotic factors. Phosphorylation at Tyr-142 (H2AXY142ph) favors the recruitment of pro-apoptosis factors. In contrast, dephosphorylation of Tyr-142 by EYA proteins (eya1, eya2, eya3 or eya4) favors the recruitment of MDC1-containing DNA repair complexes to the tail of phosphorylated Ser-139 (H2AX139ph). Phosphorylated by VRK1. Post-translationally, monoubiquitination of Lys-120 (H2AXK119ub) by ring1 and rnf2/ring2 complex gives a specific tag for epigenetic transcriptional repression. Following DNA double-strand breaks (DSBs), it is ubiquitinated through 'Lys-63' linkage of ubiquitin moieties by the E2 ligase ube2n and the E3 ligases rnf8 and rnf168, leading to the recruitment of repair proteins to sites of DNA damage. Ubiquitination at Lys-14 and Lys-16 (H2AK13Ub and H2AK15Ub, respectively) in response to DNA damage is initiated by rnf168 that mediates monoubiquitination at these 2 sites, and 'Lys-63'-linked ubiquitin are then conjugated to monoubiquitin; rnf8 is able to extend 'Lys-63'-linked ubiquitin chains in vitro. H2AK119Ub and ionizing radiation-induced 'Lys-63'-linked ubiquitination (H2AK13Ub and H2AK15Ub) are distinct events.

It localises to the nucleus. It is found in the chromosome. In terms of biological role, variant histone H2A which replaces conventional H2A in a subset of nucleosomes. Nucleosomes wrap and compact DNA into chromatin, limiting DNA accessibility to the cellular machineries which require DNA as a template. Histones thereby play a central role in transcription regulation, DNA repair, DNA replication and chromosomal stability. DNA accessibility is regulated via a complex set of post-translational modifications of histones, also called histone code, and nucleosome remodeling. Required for checkpoint-mediated arrest of cell cycle progression in response to low doses of ionizing radiation and for efficient repair of DNA double strand breaks (DSBs) specifically when modified by C-terminal phosphorylation. In Danio rerio (Zebrafish), this protein is Histone H2AX (h2ax).